The sequence spans 146 residues: Ribosome maturation factor RimP (146 aa).

The protein belongs to the RimP family.

The protein localises to the cytoplasm. Functionally, required for maturation of 30S ribosomal subunits. The protein is Ribosome maturation factor RimP of Helicobacter pylori (strain G27).